A 220-amino-acid polypeptide reads, in one-letter code: UPF0319 protein YccT (220 aa).

The first 20 residues, 1–20 (MKTGIVTTLIALCLPVSVFA), serve as a signal peptide directing secretion.

The protein belongs to the UPF0319 family.

This is UPF0319 protein YccT from Escherichia coli (strain 55989 / EAEC).